The sequence spans 430 residues: Adenylosuccinate synthetase (430 aa).

GTP is bound by residues 13–19 (GDEGKGK) and 41–43 (GHT). The Proton acceptor role is filled by Asp-14. Mg(2+)-binding residues include Asp-14 and Gly-41. IMP is bound by residues 14 to 17 (DEGK), 39 to 42 (NAGH), Thr-130, Arg-144, Gln-225, Thr-240, and Arg-304. Catalysis depends on His-42, which acts as the Proton donor. Residue 300–306 (ASTGRPR) coordinates substrate. GTP-binding positions include Arg-306, 332 to 334 (KLD), and 414 to 416 (STG).

Belongs to the adenylosuccinate synthetase family. Homodimer. The cofactor is Mg(2+).

The protein resides in the cytoplasm. It catalyses the reaction IMP + L-aspartate + GTP = N(6)-(1,2-dicarboxyethyl)-AMP + GDP + phosphate + 2 H(+). The protein operates within purine metabolism; AMP biosynthesis via de novo pathway; AMP from IMP: step 1/2. Plays an important role in the de novo pathway of purine nucleotide biosynthesis. Catalyzes the first committed step in the biosynthesis of AMP from IMP. In Xanthomonas oryzae pv. oryzae (strain MAFF 311018), this protein is Adenylosuccinate synthetase.